Reading from the N-terminus, the 251-residue chain is Putative glutathione-independent glyoxalase hsp3105 (251 aa).

It belongs to the peptidase C56 family. HSP31-like subfamily.

The protein localises to the cytoplasm. It localises to the nucleus. The enzyme catalyses methylglyoxal + H2O = (R)-lactate + H(+). Its function is as follows. May catalyze the conversion of methylglyoxal (MG) to D-lactate in a single glutathione (GSH)-independent step. May play a role in detoxifying endogenously produced glyoxals. Involved in protection against reactive oxygen species (ROS). The polypeptide is Putative glutathione-independent glyoxalase hsp3105 (Schizosaccharomyces pombe (strain 972 / ATCC 24843) (Fission yeast)).